A 138-amino-acid polypeptide reads, in one-letter code: MLQPKRRKYRKEQKGRNTGVATRGNAVSFGEYGLKAIGRGRLTARQIEAARRAMTRHIKRGGRIWIRIFPDKPISQKPAEVRMGNGKGNPEYYVAEIQPGKMLYEMDGVSEELAREAFRLAAAKLPLKTTFMVRQLGA.

Residues 1–13 show a composition bias toward basic residues; it reads MLQPKRRKYRKEQ. A disordered region spans residues 1 to 22; sequence MLQPKRRKYRKEQKGRNTGVAT.

It belongs to the universal ribosomal protein uL16 family. As to quaternary structure, part of the 50S ribosomal subunit.

In terms of biological role, binds 23S rRNA and is also seen to make contacts with the A and possibly P site tRNAs. This is Large ribosomal subunit protein uL16 from Paraburkholderia phymatum (strain DSM 17167 / CIP 108236 / LMG 21445 / STM815) (Burkholderia phymatum).